A 102-amino-acid polypeptide reads, in one-letter code: Spexin prohormone 1 (102 aa).

An N-terminal signal peptide occupies residues 1–26; it reads MKDLRTLAAYALALLLLATFVSYSRS. Positions 27–35 are excised as a propeptide; it reads APMGSFQRR. Gln49 carries the post-translational modification Glutamine amide. A propeptide spanning residues 50–102 is cleaved from the precursor; the sequence is GRRFVSEDRNEGDLYDTIRLESQSQNTENLSISKAAAFLLNVLQQARDEGEPY.

The protein belongs to the spexin family. Expressed in the anterior hypothalamus, ventromedial thalamic nucleus and medial longitudinal fasciculus of the brain (at protein level). Widely expressed. Expressed predominantly in the spleen, kidney, liver and testis. Expressed in olfactory bulb, pituitary, telencephalon, diencephalons, spinal cord, optic tectum, cerebellum and hypothalamus of the brain.

It is found in the secreted. Its subcellular location is the extracellular space. The protein resides in the cytoplasmic vesicle. The protein localises to the secretory vesicle. Functionally, plays a role in the regulation of food intake and body weight and in reproduction. May also play a role as a central modulator of cardiovascular and renal function and nociception. Its function is as follows. Brain administration of the peptide inhibits food consumption. May function as a satiety factor for feeding control. Involved in the negative regulation of the reproductive axis by inhibiting luteinizing hormone secretion from pituitary cells. The chain is Spexin prohormone 1 (spx) from Carassius auratus (Goldfish).